We begin with the raw amino-acid sequence, 1389 residues long: Superkiller protein 3 (1389 aa).

3 TPR repeats span residues 2 to 35, 36 to 69, and 90 to 123; these read AKPA…DANN, YNAN…DEKA, and HKIT…VKKY. Residues 326 to 355 are disordered; sequence SNNSAELAKETKEEDDSENSVDKKENEEDI. 15 TPR repeats span residues 381 to 414, 429 to 463, 465 to 497, 498 to 530, 538 to 574, 575 to 608, 650 to 683, 684 to 717, 719 to 751, 759 to 792, 931 to 963, 964 to 997, 999 to 1031, 1124 to 1157, and 1167 to 1200; these read TIIS…LKRL, FQLC…DPRN, HALL…HEND, PSLS…LLSM, AEAY…DPNY, APAY…DASQ, NWHH…SPKD, TNAW…DPDD, YVKY…RSKE, AETY…CCNV, VFWN…NERS, SGVW…DPDN, QAWL…SSGK, IDAK…LEGE, and LGLN…SDSN.

Component of the SKI complex composed of at least ski2, ski3 and ski8. The SKI complex interacts with ski7, which makes the link between the SKI complex and the exosome in order to perform mRNA degradation.

The protein localises to the cytoplasm. Its function is as follows. Component of the SKI complex involved in 3'-mRNA degradation pathway. This is Superkiller protein 3 (ski3) from Schizosaccharomyces pombe (strain 972 / ATCC 24843) (Fission yeast).